The following is a 497-amino-acid chain: MIIYLISLLPIIVATLMLYQRWWRSNIPPGPKPKFLLGNLHQMKPLWTHSFSEWSETYGPIISVWIGSQLTVVVSSSDLARQVLRDKDHQLSNRHRIARMTQTGTDLVWSDYSPHYVKLRKLCTLELFSLKSIENFRSLREMEARSMVVSILKDLMSNSGDDQERKPVIVRKYLAAVVLNTISRLMIGKEFGSEEGKEFKAIVEKEHLLSGSGTILDHVWWLKWVSSWFFSDKEFLAHKDRRTKWFRGAIMVEEDIEIEDHRGFVRKLLVLKEQKELSEETVGGLVWNMLTAGADTTAVVIEWAMAEMIKCPTVQEKAQQELDSVVGSERLMTESDIPILPYLQCVVKEALRLHPSTPLMLPHKASETVWVGGYKVPKGATVYVNVQAIGRDPANWINPYEFRPERFLQEETDVKGRDFRVLPFGSGRRMCPAAQLSMNLMTLVMGNLLHCFSWSSPVPGERIDMSENPGLLCNMRTPLQALALPRAAARAIPLPLD.

A helical transmembrane segment spans residues 2-19; the sequence is IIYLISLLPIIVATLMLY. C431 lines the heme pocket.

This sequence belongs to the cytochrome P450 family. The cofactor is heme. Strongly expressed in inflorescence tips, young flower buds, seeds, stamen, tapetum and pollen.

It localises to the membrane. In terms of biological role, acts redundantly with CYP98A9 as tricoumaroylspermidine meta-hydroxylase. Also catalyzes the meta-hydroxylation of the three triferuloylspermidine phenolic rings. Unable to use 5-O-(4-coumaroyl) D-quinate or 5-O-(4-coumaroyl) shikimate as substrates. The chain is Cytochrome P450 98A8 (CYP98A8) from Arabidopsis thaliana (Mouse-ear cress).